We begin with the raw amino-acid sequence, 476 residues long: Carbamoyl phosphate synthase arginine-specific small chain (476 aa).

The transit peptide at 1 to 24 (MFSHLLKPAARSAGLLGHVNRRYL) directs the protein to the mitochondrion. The Glutamine amidotransferase type-1 domain maps to 228 to 415 (HVALIDCGVK…IQNVQRYKDH (188 aa)). Cys304 acts as the Nucleophile in catalysis. Catalysis depends on residues His388 and Glu390.

The protein belongs to the CarA family. As to quaternary structure, heterodimer composed of 2 chains; the small (or glutamine) chain promotes the hydrolysis of glutamine to ammonia, which is used by the large (or ammonia) chain to synthesize carbamoyl phosphate.

Its subcellular location is the mitochondrion matrix. The catalysed reaction is hydrogencarbonate + L-glutamine + 2 ATP + H2O = carbamoyl phosphate + L-glutamate + 2 ADP + phosphate + 2 H(+). It catalyses the reaction L-glutamine + H2O = L-glutamate + NH4(+). It participates in amino-acid biosynthesis; L-arginine biosynthesis; carbamoyl phosphate from bicarbonate: step 1/1. Small subunit of the arginine-specific carbamoyl phosphate synthase (CPSase). CPSase catalyzes the formation of carbamoyl phosphate from the ammonia moiety of glutamine, carbonate, and phosphate donated by ATP, the first step of the arginine biosynthetic pathway. The small subunit (glutamine amidotransferase) binds and cleaves glutamine to supply the large subunit with the substrate ammonia. This Phaeosphaeria nodorum (strain SN15 / ATCC MYA-4574 / FGSC 10173) (Glume blotch fungus) protein is Carbamoyl phosphate synthase arginine-specific small chain (CPA1).